The chain runs to 121 residues: Cell division protein FtsB (121 aa).

Residues 1 to 6 (MRNWRW) are Cytoplasmic-facing. The helical transmembrane segment at 7–24 (LLLVLAVLLAWLQYRFWF) threads the bilayer. Residues 25–121 (GPGNSGEVMM…PEPVDPVDHP (97 aa)) are Periplasmic-facing. Positions 31–66 (EVMMLEAQVAHQTQDNEGLRQRNQALAAEVKDLKDG) form a coiled coil. The interval 98 to 121 (APASAEASAPAQQAPEPVDPVDHP) is disordered. The span at 99–113 (PASAEASAPAQQAPE) shows a compositional bias: low complexity.

It belongs to the FtsB family. As to quaternary structure, part of a complex composed of FtsB, FtsL and FtsQ.

The protein localises to the cell inner membrane. Functionally, essential cell division protein. May link together the upstream cell division proteins, which are predominantly cytoplasmic, with the downstream cell division proteins, which are predominantly periplasmic. This Xanthomonas axonopodis pv. citri (strain 306) protein is Cell division protein FtsB.